Reading from the N-terminus, the 187-residue chain is Small ribosomal subunit protein uS7 (187 aa).

Belongs to the universal ribosomal protein uS7 family. Part of the 30S ribosomal subunit.

Its function is as follows. One of the primary rRNA binding proteins, it binds directly to 16S rRNA where it nucleates assembly of the head domain of the 30S subunit. Is located at the subunit interface close to the decoding center. The chain is Small ribosomal subunit protein uS7 from Picrophilus torridus (strain ATCC 700027 / DSM 9790 / JCM 10055 / NBRC 100828 / KAW 2/3).